An 82-amino-acid chain; its full sequence is Myrmicitoxin(1)-Pm3a (82 aa).

The first 23 residues, methionine 1–alanine 23, serve as a signal peptide directing secretion. A propeptide spanning residues threonine 24–proline 59 is cleaved from the precursor. Leucine 81 bears the Leucine amide mark.

The protein belongs to the formicidae venom clade 1 family. Expressed by the venom gland.

It localises to the secreted. Toxin that causes a slowly developing temporary paralysis when intrathoracically injected into insects (blowflies). Does not cause spontaneous nocifensive behaviors by intraplantar injection in mice. This Pogonomyrmex maricopa (Maricopa harvester ant) protein is Myrmicitoxin(1)-Pm3a.